Consider the following 57-residue polypeptide: Potassium channel toxin alpha-KTx 8.5 (57 aa).

An N-terminal signal peptide occupies residues 1-28; sequence MSRLYAIILIALVLNVIMTIMPDSKVEA. 3 disulfide bridges follow: Cys-31–Cys-47, Cys-34–Cys-52, and Cys-38–Cys-54.

The protein belongs to the short scorpion toxin superfamily. Potassium channel inhibitor family. Alpha-KTx 08 subfamily. In terms of tissue distribution, expressed by the venom gland.

Its subcellular location is the secreted. In terms of biological role, selectively inhibits voltage-gated potassium channels Kv1.2/KCNA2 (IC(50)=183 nM). The polypeptide is Potassium channel toxin alpha-KTx 8.5 (Odontobuthus doriae (Yellow Iranian scorpion)).